Consider the following 147-residue polypeptide: Large ribosomal subunit protein uL15 (147 aa).

Residues 1-42 are disordered; that stretch reads MTIKVHHLRPAPGAKTTKTRVGRGEGSKGKTAGRGTKGSKAR.

Belongs to the universal ribosomal protein uL15 family. In terms of assembly, part of the 50S ribosomal subunit.

In terms of biological role, binds to the 23S rRNA. The chain is Large ribosomal subunit protein uL15 from Salinispora tropica (strain ATCC BAA-916 / DSM 44818 / JCM 13857 / NBRC 105044 / CNB-440).